A 365-amino-acid polypeptide reads, in one-letter code: Probable secreted beta-glucosidase UTH1 (365 aa).

An N-terminal signal peptide occupies residues 1-17 (MKLSALLALSASTAVLA).

The protein belongs to the SUN family.

It localises to the mitochondrion outer membrane. The protein resides in the secreted. Its subcellular location is the cell wall. Its function is as follows. Involved in aging, oxidative stress response, and in the regulation of mitochondrial biogenesis. Inactivation of UTH1 increases life span, leads to higher resistance to heat stress and against hydrogen peroxide, and increases sensitivity to the superoxide radical-generating drug paraquat and to copper. Also required for the selective autophagic degradation of mitochondria (mitophagy) in response to nitrogen starvation. Involved in the remodeling of the cell wall during the various phases of yeast culture development and under various environmental conditions and plays a role in septation. Involved in cell sensitivity to boric acid. This is Probable secreted beta-glucosidase UTH1 (UTH1) from Saccharomyces cerevisiae (strain ATCC 204508 / S288c) (Baker's yeast).